An 847-amino-acid chain; its full sequence is MKNNNYNPKKIEKYVQKYWVKKKIFFTKIDKEKKKFYCLPMLPYPSGKLHMGHVRNYTISDVISRFHRMLGKNVLQPIGWDSFGLPAEETAIKNNISPKKWTFKNIKTMKKQLQSLGFSYDWNKEITTCNPEYYRWEQLFFIKLFKKKLIYKKKSIVNWCEKDKTVLANEQVQKGVCWRCGTKIKLRKISQWFIKIKKYADKFLKDLKLLKKWPKEVISMQKNWIGKSKGLKIKCKIYKKKYFLKIFTTKPETIMGISFFAISMYHPLINLFLRKNIEIQKFLKKNKYSINTEFQKSNILFGINTHLYVIHPINKKKIPLWISNYVKYNYATGAIMSVPCSNKIDYNFSKLYNIPFIKIFSKKNKKLLINSDNFNNLNIKKARNKISNFLINKKIAKKYIYYKIQDWCISRQRYWGTPIPIVIDNKKNIITVPKKKLPVILPKYIYKKKSLQSLSLYSLWLKTKISGKKVTRETDTLDTFMESSWYYARYTNPKYEKDIIDPKASEYWLPVDQYIGGIEHAVMHLIYFRFYHKLLYDFGYVQSKEPVKKLICQGMVIIDSFYKYNKDGSKKWLSISKIEINRDSKGKIISAIEKSSQKKIIYAGKIKMSKSKNNGIDPVNIIKQYGADSLRLFIMFAAPINISLEWNSKNIIGMHRFLKKIWNFVFIIIKKKKEKIKKIDLNKNKKTYIYKLNTIIKKVTYNIQERNSFNTAIAEIIKFFNYLVKLYKIYNIKKKNLIFCISTIIKMLYPFTPHICFILWKKIYGKKSCIEKETWPKFNKKFFLKEKNNIIIQINGKKKDIMKIHAIISKKEIIKLILKNEKIKKHLYKKIIKKTIYIPNKVINFVL.

Residues 43-53 (PYPSGKLHMGH) carry the 'HIGH' region motif. The 'KMSKS' region motif lies at 607 to 611 (KMSKS). Lysine 610 is a binding site for ATP.

This sequence belongs to the class-I aminoacyl-tRNA synthetase family.

The protein resides in the cytoplasm. It catalyses the reaction tRNA(Leu) + L-leucine + ATP = L-leucyl-tRNA(Leu) + AMP + diphosphate. The polypeptide is Leucine--tRNA ligase (Buchnera aphidicola subsp. Cinara cedri (strain Cc)).